A 442-amino-acid polypeptide reads, in one-letter code: Radical S-adenosyl methionine domain-containing protein 1, mitochondrial (442 aa).

A mitochondrion-targeting transit peptide spans M1–R22. Positions M1–S37 are disordered. The Radical SAM core domain maps to A34 to R270. Residue Y43 participates in S-adenosyl-L-methionine binding. [4Fe-4S] cluster is bound by residues C49, C53, and C56. S-adenosyl-L-methionine-binding positions include G98, G99–T100, E131, Q158, R170, and D195.

Belongs to the anaerobic coproporphyrinogen-III oxidase family. HemW subfamily. The cofactor is [4Fe-4S] cluster.

The protein localises to the mitochondrion. Its function is as follows. May be a heme chaperone, appears to bind heme. Homologous bacterial proteins do not have oxygen-independent coproporphyrinogen-III oxidase activity. Binds 1 [4Fe-4S] cluster. The cluster is coordinated with 3 cysteines and an exchangeable S-adenosyl-L-methionine. The sequence is that of Radical S-adenosyl methionine domain-containing protein 1, mitochondrial (RSAD1) from Bos taurus (Bovine).